The primary structure comprises 278 residues: Glutamate racemase (278 aa).

Substrate is bound by residues 25 to 26 (DS) and 57 to 58 (YG). The active-site Proton donor/acceptor is the C89. Substrate is bound at residue 90–91 (NT). Residue C204 is the Proton donor/acceptor of the active site. Substrate is bound at residue 205–206 (TH).

The protein belongs to the aspartate/glutamate racemases family.

It catalyses the reaction L-glutamate = D-glutamate. It functions in the pathway cell wall biogenesis; peptidoglycan biosynthesis. Functionally, provides the (R)-glutamate required for cell wall biosynthesis. This chain is Glutamate racemase, found in Brucella anthropi (strain ATCC 49188 / DSM 6882 / CCUG 24695 / JCM 21032 / LMG 3331 / NBRC 15819 / NCTC 12168 / Alc 37) (Ochrobactrum anthropi).